The chain runs to 194 residues: PRELI domain containing protein 3B (194 aa).

The PRELI/MSF1 domain maps to 1–172 (MKIWTSEHVF…VIHKLNAEIE (172 aa)). Phosphoserine occurs at positions 46 and 51.

It belongs to the slowmo family.

The chain is PRELI domain containing protein 3B (PRELID3B) from Homo sapiens (Human).